The primary structure comprises 835 residues: Leucine--tRNA ligase (835 aa).

The short motif at 36-46 (PYPSGKIHVGH) is the 'HIGH' region element. Positions 602-606 (KMSKS) match the 'KMSKS' region motif. Position 605 (Lys605) interacts with ATP.

This sequence belongs to the class-I aminoacyl-tRNA synthetase family.

The protein resides in the cytoplasm. It catalyses the reaction tRNA(Leu) + L-leucine + ATP = L-leucyl-tRNA(Leu) + AMP + diphosphate. In Rickettsia felis (strain ATCC VR-1525 / URRWXCal2) (Rickettsia azadi), this protein is Leucine--tRNA ligase.